Consider the following 205-residue polypeptide: Coatomer subunit zeta-2 (205 aa).

The span at 1–12 (MQRPEAWPRPHP) shows a compositional bias: basic and acidic residues. Residues 1–33 (MQRPEAWPRPHPGEGASAAQAGGAAPPTRATEQ) form a disordered region. The segment covering 13-30 (GEGASAAQAGGAAPPTRA) has biased composition (low complexity).

It belongs to the adaptor complexes small subunit family. Oligomeric complex.

The protein resides in the cytoplasm. Its subcellular location is the cytosol. The protein localises to the endoplasmic reticulum-Golgi intermediate compartment membrane. It is found in the golgi apparatus membrane. It localises to the cytoplasmic vesicle. The protein resides in the COPI-coated vesicle membrane. The coatomer is a cytosolic protein complex that binds to dilysine motifs and reversibly associates with Golgi non-clathrin-coated vesicles, which further mediate biosynthetic protein transport from the ER, via the Golgi up to the trans Golgi network. Coatomer complex is required for budding from Golgi membranes, and is essential for the retrograde Golgi-to-ER transport of dilysine-tagged proteins. The zeta subunit may be involved in regulating the coat assembly and, hence, the rate of biosynthetic protein transport due to its association-dissociation properties with the coatomer complex. This is Coatomer subunit zeta-2 (Copz2) from Mus musculus (Mouse).